Reading from the N-terminus, the 315-residue chain is tRNA dimethylallyltransferase (315 aa).

Residue glycine 11–serine 18 coordinates ATP. Residue threonine 13–serine 18 participates in substrate binding. Interaction with substrate tRNA stretches follow at residues aspartate 36–glutamine 39 and glutamine 160–arginine 164.

This sequence belongs to the IPP transferase family. Monomer. Mg(2+) serves as cofactor.

It carries out the reaction adenosine(37) in tRNA + dimethylallyl diphosphate = N(6)-dimethylallyladenosine(37) in tRNA + diphosphate. Functionally, catalyzes the transfer of a dimethylallyl group onto the adenine at position 37 in tRNAs that read codons beginning with uridine, leading to the formation of N6-(dimethylallyl)adenosine (i(6)A). This chain is tRNA dimethylallyltransferase, found in Rickettsia bellii (strain OSU 85-389).